The following is a 749-amino-acid chain: Replication restart protein PriA (749 aa).

In terms of domain architecture, Helicase ATP-binding spans 224-391 (SLKTSQFHTH…LSGKYVLSRL (168 aa)). Residue 237–244 (GITGSGKT) coordinates ATP. The DEAH box signature appears at 333–336 (DEEH). Zn(2+)-binding residues include Cys-454, Cys-457, Cys-463, Cys-466, Cys-481, Cys-484, Cys-495, and Cys-498. Residues 490 to 658 (DLPQSCPKCL…EYPPFIRLIR (169 aa)) form the Helicase C-terminal domain.

The protein belongs to the helicase family. PriA subfamily. In terms of assembly, component of the replication restart primosome. Requires Zn(2+) as cofactor.

It catalyses the reaction Couples ATP hydrolysis with the unwinding of duplex DNA by translocating in the 3'-5' direction.. The catalysed reaction is ATP + H2O = ADP + phosphate + H(+). Initiates the restart of stalled replication forks, which reloads the replicative helicase on sites other than the origin of replication. Recognizes and binds to abandoned replication forks and remodels them to uncover a helicase loading site. Promotes assembly of the primosome at these replication forks. The sequence is that of Replication restart protein PriA from Chlamydia pneumoniae (Chlamydophila pneumoniae).